We begin with the raw amino-acid sequence, 426 residues long: G2/mitotic-specific cyclin-A (426 aa).

The segment covering Met1–Ile11 has biased composition (polar residues). A disordered region spans residues Met1 to Val22.

The protein belongs to the cyclin family. Cyclin AB subfamily.

Its function is as follows. Essential for the control of the cell cycle at the G2/M (mitosis) transition. Interacts with the CDC2 and CDK2 protein kinases to form MPF. G2/M cyclins accumulate steadily during G2 and are abruptly destroyed at mitosis. The protein is G2/mitotic-specific cyclin-A of Patella vulgata (Common limpet).